Reading from the N-terminus, the 173-residue chain is Crossover junction endodeoxyribonuclease RuvC (173 aa).

Residues Asp8, Glu69, and Asp141 contribute to the active site. Residues Asp8, Glu69, and Asp141 each coordinate Mg(2+).

Belongs to the RuvC family. As to quaternary structure, homodimer which binds Holliday junction (HJ) DNA. The HJ becomes 2-fold symmetrical on binding to RuvC with unstacked arms; it has a different conformation from HJ DNA in complex with RuvA. In the full resolvosome a probable DNA-RuvA(4)-RuvB(12)-RuvC(2) complex forms which resolves the HJ. The cofactor is Mg(2+).

Its subcellular location is the cytoplasm. It carries out the reaction Endonucleolytic cleavage at a junction such as a reciprocal single-stranded crossover between two homologous DNA duplexes (Holliday junction).. In terms of biological role, the RuvA-RuvB-RuvC complex processes Holliday junction (HJ) DNA during genetic recombination and DNA repair. Endonuclease that resolves HJ intermediates. Cleaves cruciform DNA by making single-stranded nicks across the HJ at symmetrical positions within the homologous arms, yielding a 5'-phosphate and a 3'-hydroxyl group; requires a central core of homology in the junction. The consensus cleavage sequence is 5'-(A/T)TT(C/G)-3'. Cleavage occurs on the 3'-side of the TT dinucleotide at the point of strand exchange. HJ branch migration catalyzed by RuvA-RuvB allows RuvC to scan DNA until it finds its consensus sequence, where it cleaves and resolves the cruciform DNA. The sequence is that of Crossover junction endodeoxyribonuclease RuvC from Stenotrophomonas maltophilia (strain R551-3).